We begin with the raw amino-acid sequence, 360 residues long: Aminomethyltransferase (360 aa).

It belongs to the GcvT family. As to quaternary structure, the glycine cleavage system is composed of four proteins: P, T, L and H.

The catalysed reaction is N(6)-[(R)-S(8)-aminomethyldihydrolipoyl]-L-lysyl-[protein] + (6S)-5,6,7,8-tetrahydrofolate = N(6)-[(R)-dihydrolipoyl]-L-lysyl-[protein] + (6R)-5,10-methylene-5,6,7,8-tetrahydrofolate + NH4(+). Functionally, the glycine cleavage system catalyzes the degradation of glycine. In Bdellovibrio bacteriovorus (strain ATCC 15356 / DSM 50701 / NCIMB 9529 / HD100), this protein is Aminomethyltransferase.